The sequence spans 250 residues: Cell division protein ZapD (250 aa).

This sequence belongs to the ZapD family. As to quaternary structure, interacts with FtsZ.

The protein resides in the cytoplasm. Its function is as follows. Cell division factor that enhances FtsZ-ring assembly. Directly interacts with FtsZ and promotes bundling of FtsZ protofilaments, with a reduction in FtsZ GTPase activity. The polypeptide is Cell division protein ZapD (Yersinia pestis bv. Antiqua (strain Antiqua)).